Consider the following 281-residue polypeptide: Homeobox protein Hox-A5 (281 aa).

Disordered regions lie at residues 65-144 (VGNE…PCSS) and 162-183 (PLEEEKPAGSAPTTPQNVSDST). 2 stretches are compositionally biased toward polar residues: residues 68 to 99 (ERTQGYSPSHSAATTPSVEPVRYTQSANSTGT) and 114 to 127 (VASSSPVTETQSQH). Over residues 132–144 (NSITTPCSTPCSS) the composition is skewed to low complexity. The span at 172-183 (APTTPQNVSDST) shows a compositional bias: polar residues. The Antp-type hexapeptide motif lies at 187–192 (IYPWMR). The homeobox DNA-binding region spans 205–264 (GKRARTAYTRYQTLELEKEFHFNRYLTRRRRIEIAHALCLSERQIKIWFQNRRMKWKKDN).

Belongs to the Antp homeobox family.

Its subcellular location is the nucleus. In terms of biological role, sequence-specific transcription factor which is part of a developmental regulatory system that provides cells with specific positional identities on the anterior-posterior axis. This chain is Homeobox protein Hox-A5 (hoxa5), found in Morone saxatilis (Striped bass).